Here is a 1848-residue protein sequence, read N- to C-terminus: Unconventional myosin-Vb (1848 aa).

Residue Met-1 is modified to N-acetylmethionine. In terms of domain architecture, Myosin N-terminal SH3-like spans 8 to 60; sequence SQCTRVWIPDPDEVWRSAELTKDYKEGDKSLQLRLEDETILEYPIDVQRNQLP. The requires for interaction with LIMA1 stretch occupies residues 21–40; that stretch reads VWRSAELTKDYKEGDKSLQL. Residues 69–761 enclose the Myosin motor domain; sequence VGENDLTALS…QVAYLEKLRA (693 aa). Residue 163–170 coordinates ATP; the sequence is GESGAGKT. The tract at residues 596 to 630 is disordered; it reads KDPVPATTPGKGSSSKISVRSARPPMKVSNKEHKK. The interval 640 to 662 is actin-binding; sequence LHLLMETLNATTPHYVRCIKPND. 6 consecutive IQ domains span residues 769–798, 792–821, 817–848, 840–869, 865–896, and 888–917; these read IMIQKTVRGWLQKVKYHRLKGATLTLQRYC, LTLQRYCRGHLARRLAEHLRRIRAAVVLQK, VVLQKHYRMQRARQAYQRVRRAAVVIQAFTRA, VVIQAFTRAMFVRRTYRQVLMEHKATTIQK, TTIQKHVRGWMARRHFQRLRDAAIVIQCAFRM, and IVIQCAFRMLKARRELKALRIEARSAEHLK. Coiled coils occupy residues 899–1266 and 1341–1471; these read ARRE…ILRT and RLLE…GMLE. Disordered stretches follow at residues 1093 to 1123 and 1166 to 1192; these read QTPGHRRNPSNQSSLESDSNYPSISTSEIGD and QLEKREQQDSKKVQAEPPQTDIDLDPN. Positions 1101–1121 are enriched in polar residues; the sequence is PSNQSSLESDSNYPSISTSEI. Positions 1166-1179 are enriched in basic and acidic residues; that stretch reads QLEKREQQDSKKVQ. Ser-1446 is modified (phosphoserine). The Dilute domain occupies 1526–1803; the sequence is TSTINGIKKV…IRTIQAQLQE (278 aa).

Belongs to the TRAFAC class myosin-kinesin ATPase superfamily. Myosin family. Component of the CART complex, at least composed of ACTN4, HGS/HRS, MYO5B and TRIM3. Interacts with RAB11FIP2, RAB11A, and RAB8A. Found in a complex with CFTR and RAB11A. Interacts with NPC1L1;. Interacts with LIMA1.

The protein resides in the cytoplasm. Functionally, may be involved in vesicular trafficking via its association with the CART complex. The CART complex is necessary for efficient transferrin receptor recycling but not for EGFR degradation. Required in a complex with RAB11A and RAB11FIP2 for the transport of NPC1L1 to the plasma membrane. Together with RAB11A participates in CFTR trafficking to the plasma membrane and TF (transferrin) recycling in nonpolarized cells. Together with RAB11A and RAB8A participates in epithelial cell polarization. Together with RAB25 regulates transcytosis. Required for proper localization of bile salt export pump ABCB11 at the apical/canalicular plasma membrane of hepatocytes. The sequence is that of Unconventional myosin-Vb (MYO5B) from Homo sapiens (Human).